A 671-amino-acid chain; its full sequence is DNA ligase (671 aa).

NAD(+) is bound by residues 32 to 36 (DAEYD), 81 to 82 (SL), and E113. K115 acts as the N6-AMP-lysine intermediate in catalysis. R136, E173, K290, and K314 together coordinate NAD(+). Residues C408, C411, C426, and C432 each coordinate Zn(2+). A BRCT domain is found at 593-671 (EIDSPFAGKT…ETEMLHLLGS (79 aa)).

This sequence belongs to the NAD-dependent DNA ligase family. LigA subfamily. Requires Mg(2+) as cofactor. The cofactor is Mn(2+).

It carries out the reaction NAD(+) + (deoxyribonucleotide)n-3'-hydroxyl + 5'-phospho-(deoxyribonucleotide)m = (deoxyribonucleotide)n+m + AMP + beta-nicotinamide D-nucleotide.. Its function is as follows. DNA ligase that catalyzes the formation of phosphodiester linkages between 5'-phosphoryl and 3'-hydroxyl groups in double-stranded DNA using NAD as a coenzyme and as the energy source for the reaction. It is essential for DNA replication and repair of damaged DNA. This is DNA ligase from Escherichia coli O6:K15:H31 (strain 536 / UPEC).